The chain runs to 119 residues: Protein Wnt-4 (119 aa).

A lipid anchor (O-palmitoleoyl serine; by PORCN) is attached at serine 1. 2 disulfides stabilise this stretch: cysteine 69–cysteine 100 and cysteine 85–cysteine 95. N-linked (GlcNAc...) asparagine glycosylation occurs at asparagine 86.

The protein belongs to the Wnt family. Post-translationally, palmitoleoylation is required for efficient binding to frizzled receptors. Depalmitoleoylation leads to Wnt signaling pathway inhibition.

The protein localises to the secreted. The protein resides in the extracellular space. It is found in the extracellular matrix. Ligand for members of the frizzled family of seven transmembrane receptors. Plays an important role in embryonic development. This chain is Protein Wnt-4 (WNT4), found in Meleagris gallopavo (Wild turkey).